Reading from the N-terminus, the 327-residue chain is Regulatory protein MsrR (327 aa).

The span at Met1–Thr18 shows a compositional bias: basic and acidic residues. Residues Met1–Lys24 are disordered. The Cytoplasmic portion of the chain corresponds to Met1–Lys31. Residues Leu32–His52 traverse the membrane as a helical; Signal-anchor for type II membrane protein segment. Over Ser53–Asp327 the chain is Extracellular.

It belongs to the LytR/CpsA/Psr (LCP) family.

The protein localises to the cell membrane. Involved in SarA attenuation. Affects resistance to oxacillin and teicoplanin, as well as the synthesis of virulence factors. In Staphylococcus aureus (strain NCTC 8325 / PS 47), this protein is Regulatory protein MsrR (msrR).